The following is a 516-amino-acid chain: 2-isopropylmalate synthase (516 aa).

One can recognise a Pyruvate carboxyltransferase domain in the interval 5 to 267 (IIIFDTTLRD…STDINIKEIH (263 aa)). Asp-14, His-202, His-204, and Asn-238 together coordinate Mn(2+). The segment at 393 to 516 (KLEYFDVQSK…VNKELERLQK (124 aa)) is regulatory domain.

Belongs to the alpha-IPM synthase/homocitrate synthase family. LeuA type 1 subfamily. In terms of assembly, homodimer. Mn(2+) is required as a cofactor.

The protein resides in the cytoplasm. The catalysed reaction is 3-methyl-2-oxobutanoate + acetyl-CoA + H2O = (2S)-2-isopropylmalate + CoA + H(+). It functions in the pathway amino-acid biosynthesis; L-leucine biosynthesis; L-leucine from 3-methyl-2-oxobutanoate: step 1/4. Functionally, catalyzes the condensation of the acetyl group of acetyl-CoA with 3-methyl-2-oxobutanoate (2-ketoisovalerate) to form 3-carboxy-3-hydroxy-4-methylpentanoate (2-isopropylmalate). This chain is 2-isopropylmalate synthase, found in Buchnera aphidicola subsp. Cinara cedri (strain Cc).